Here is a 134-residue protein sequence, read N- to C-terminus: Small ribosomal subunit protein uS8c (134 aa).

This sequence belongs to the universal ribosomal protein uS8 family. Part of the 30S ribosomal subunit.

It is found in the plastid. The protein resides in the chloroplast. Its function is as follows. One of the primary rRNA binding proteins, it binds directly to 16S rRNA central domain where it helps coordinate assembly of the platform of the 30S subunit. This is Small ribosomal subunit protein uS8c (rps8) from Vitis vinifera (Grape).